The chain runs to 766 residues: FYVE, RhoGEF and PH domain-containing protein 4 (766 aa).

The tract at residues 1 to 150 is actin filament-binding; that stretch reads MEESNPAPTS…SSVTNSHDEN (150 aa). Polar residues-rich tracts occupy residues 43–65, 132–145, and 152–161; these read STMN…TPQK, RNET…SVTN, and CDSSCRTQGT. The segment at 43–167 is disordered; sequence STMNLNIPQT…TQGTDLGLPS (125 aa). The 188-residue stretch at 206–393 folds into the DH domain; sequence KLHKIATELL…STAASHSNSA (188 aa). A PH 1 domain is found at 422–521; the sequence is ELIKEGQILK…WIKALQESID (100 aa). An FYVE-type zinc finger spans residues 559 to 619; sequence DNEVTMCMKC…VCKDCYQIMS (61 aa). Residues Cys-565, Cys-568, Cys-582, Cys-585, Cys-590, Cys-593, Cys-611, and Cys-614 each coordinate Zn(2+). The 98-residue stretch at 643–740 folds into the PH 2 domain; it reads NSEVCSFLQY…WLKIILLAVT (98 aa). A phosphoserine mark is found at Ser-702 and Ser-716. Residues 745–766 are disordered; it reads DGPSEHLDTLDNLPGPKEKSEC.

Homooligomer. Detected in brain, lung, liver, skeletal muscle, kidney, testis and cultured hippocampal neurons.

Its subcellular location is the cytoplasm. It is found in the cytoskeleton. The protein localises to the cell projection. The protein resides in the filopodium. Functionally, activates CDC42, a member of the Ras-like family of Rho- and Rac proteins, by exchanging bound GDP for free GTP. Plays a role in regulating the actin cytoskeleton and cell shape. Activates MAPK8. The chain is FYVE, RhoGEF and PH domain-containing protein 4 (Fgd4) from Rattus norvegicus (Rat).